The sequence spans 745 residues: Probable GMP synthase [glutamine-hydrolyzing] (745 aa).

Positions 1-37 (MKRSSSMLDINEDSQHSTNKAPPPKKAPEDRFDSANM) are disordered. In terms of domain architecture, Glutamine amidotransferase type-1 spans 60–252 (RIAILDFGAQ…LFKVVGCCGN (193 aa)). Cys-138 acts as the For GATase activity in catalysis. Residues His-226 and Glu-228 contribute to the active site. In terms of domain architecture, GMPS ATP-PPase spans 253–461 (FTIQNREQSC…LGLPESIVQR (209 aa)). Residue 280–286 (SGGVDSA) coordinates ATP. Arg-363, Asp-563, Gln-662, Lys-737, and Glu-743 together coordinate substrate.

In terms of assembly, homodimer.

The catalysed reaction is XMP + L-glutamine + ATP + H2O = GMP + L-glutamate + AMP + diphosphate + 2 H(+). The protein operates within purine metabolism; GMP biosynthesis; GMP from XMP (L-Gln route): step 1/1. The chain is Probable GMP synthase [glutamine-hydrolyzing] (gmps-1) from Caenorhabditis elegans.